The sequence spans 545 residues: Glucans biosynthesis protein G (545 aa).

A signal peptide spans 1 to 34 (MVSLLRCQSFKPSSSLICSLALSAAFALSSSAFA). The disordered stretch occupies residues 38 to 60 (KPAENKPATPVVSPPKATAQPAN).

This sequence belongs to the OpgD/OpgG family.

The protein localises to the periplasm. It participates in glycan metabolism; osmoregulated periplasmic glucan (OPG) biosynthesis. Its function is as follows. Involved in the biosynthesis of osmoregulated periplasmic glucans (OPGs). In Shewanella sp. (strain MR-7), this protein is Glucans biosynthesis protein G.